The sequence spans 481 residues: uncharacterized protein (481 aa).

It to M.tuberculosis RV2411c.

This is an uncharacterized protein from Synechocystis sp. (strain ATCC 27184 / PCC 6803 / Kazusa).